A 466-amino-acid chain; its full sequence is Hydroxyacid-oxoacid transhydrogenase, mitochondrial (466 aa).

At lysine 444 the chain carries N6-acetyllysine. Residue serine 451 is modified to Phosphoserine.

It belongs to the iron-containing alcohol dehydrogenase family. Hydroxyacid-oxoacid transhydrogenase subfamily.

The protein localises to the mitochondrion. It carries out the reaction (S)-3-hydroxybutanoate + 2-oxoglutarate = (R)-2-hydroxyglutarate + acetoacetate. It catalyses the reaction 4-hydroxybutanoate + 2-oxoglutarate = (R)-2-hydroxyglutarate + succinate semialdehyde. Functionally, catalyzes the cofactor-independent reversible oxidation of gamma-hydroxybutyrate (GHB) to succinic semialdehyde (SSA) coupled to reduction of 2-ketoglutarate (2-KG) to D-2-hydroxyglutarate (D-2-HG). L-3-hydroxybutyrate (L-3-OHB) is also a substrate for HOT when using 2-KG as hydrogen acceptor, resulting in the formation of D-2-HG. This chain is Hydroxyacid-oxoacid transhydrogenase, mitochondrial (ADHFE1), found in Bos taurus (Bovine).